We begin with the raw amino-acid sequence, 395 residues long: Cation channel sperm-associated protein 3 (395 aa).

Residues 1-48 (MSQHFHHNPVRVKSGSLFATASEALQARLSKIKRKDKECQAYFRKVIK) are Cytoplasmic-facing. A helical transmembrane segment spans residues 49 to 71 (STFFQIVMITTVTTNSFLLVLGT). Residues 72 to 80 (NYDIQFEFF) are Extracellular-facing. A helical membrane pass occupies residues 81–107 (RTFEVSELFFVSVYVCEFLMKVYVDPI). Position 108 (T108) is a topological domain, cytoplasmic. Residues 109–131 (YWKDGYNILDVIILIILTIPYLL) traverse the membrane as a helical segment. At 132 to 143 (RKIKGNHSAYLH) the chain is on the extracellular side. The chain crosses the membrane as a helical span at residues 144–160 (FADGIQSLRILKLISYS). Topologically, residues 161–168 (RGIRTLII) are cytoplasmic. Residues 169–195 (AVGETVYTVASVLTLLFLLMFVFAILG) traverse the membrane as a helical segment. Over 196–216 (FCLFGVTDRGDLENWGNLASA) the chain is Extracellular. Positions 217-236 (FFTLFSLATVDGWTDLQEEL) form an intramembrane region, helical; Pore-forming. Over 237 to 242 (DKRKFT) the chain is Extracellular. The helical transmembrane segment at 243-268 (VSRAFTILFILLASFIFLNMFVGVMI) threads the bilayer. Topologically, residues 269-395 (MHTEDSMKKF…ESSSSLSGLS (127 aa)) are cytoplasmic.

Belongs to the cation channel sperm-associated (TC 1.A.1.19) family. In terms of assembly, component of the CatSper complex or CatSpermasome composed of the core pore-forming members CATSPER1, CATSPER2, CATSPER3 and CATSPER4 as well as auxiliary members CATSPERB, CATSPERG2, CATSPERD, CATSPERE, CATSPERZ, C2CD6/CATSPERT, SLCO6C1, TMEM249, TMEM262 and EFCAB9. HSPA1 may be an additional auxiliary complex member. The core complex members CATSPER1, CATSPER2, CATSPER3 and CATSPER4 form a heterotetrameric channel. The auxiliary CATSPERB, CATSPERG2, CATSPERD and CATSPERE subunits form a pavilion-like structure over the pore which stabilizes the complex through interactions with CATSPER4, CATSPER3, CATSPER1 and CATSPER2 respectively. SLCO6C1 interacts with CATSPERE and TMEM262/CATSPERH interacts with CATSPERB, further stabilizing the complex. C2CD6/CATSPERT interacts at least with CATSPERD and is required for targeting the CatSper complex in the flagellar membrane. In terms of tissue distribution, testis-specific.

The protein localises to the cell projection. It is found in the cilium. The protein resides in the flagellum membrane. It catalyses the reaction Ca(2+)(in) = Ca(2+)(out). With respect to regulation, in contrast to the human ortholog, not activated by progesterone. Activated by intracellular alkalinization. Functionally, pore-forming subunit of the CatSper complex, a sperm-specific voltage-gated calcium channel that plays a central role in sperm cell hyperactivation. Controls calcium entry to mediate the hyperactivated motility, a step needed for sperm motility which is essential late in the preparation of sperm for fertilization. This chain is Cation channel sperm-associated protein 3 (Catsper3), found in Mus musculus (Mouse).